The following is a 4568-amino-acid chain: Dynein heavy chain, cytoplasmic (4568 aa).

A stem region spans residues 1–1826; it reads MDSGNESSII…VVKMANSQFF (1826 aa). Coiled coils occupy residues 587–652, 814–844, 1241–1274, 1324–1340, and 1559–1591; these read QTRL…VLGK, KLAE…NVLK, QEAL…LDLS, RKIR…LKQL, and VNMQ…RERS. AAA regions lie at residues 1827–2049, 2118–2394, 2498–2747, and 2842–3111; these read YGFE…VLVS, QQLS…PTPQ, EIES…WVRG, and GFYE…GHRV. ATP contacts are provided by residues 1865 to 1872, 2163 to 2170, 2537 to 2544, and 2880 to 2887; these read GPAGTGKT, GSSGSGKT, GPPGSGKT, and GTAGAGKT. Coiled-coil stretches lie at residues 3132–3229, 3339–3432, and 3707–3739; these read EKRS…AQVE, ARAQ…RDRW, and NSVI…EVDA. Positions 3132–3432 are stalk; it reads EKRSDLEEEK…SSLRSERDRW (301 aa). AAA stretches follow at residues 3496–3725 and 3954–4169; these read LSTV…EVAQ and AHRV…TLDA. Positions 4359-4386 form a coiled coil; sequence QLLKDIRRDLNEISAVCRAEKKQNNETR.

This sequence belongs to the dynein heavy chain family. Consists of at least two heavy chains and a number of intermediate and light chains.

The protein localises to the cytoplasm. It localises to the cytoskeleton. Functionally, cytoplasmic dynein acts as a motor for the intracellular retrograde motility of vesicles and organelles along microtubules. Dynein has ATPase activity; the force-producing power stroke is thought to occur on release of ADP. May play a role in nuclear migration in hypodermal precursor cells. May be involved in the transport of synaptic vesicle components towards the axon of the DA motor neuron. This function may involve the regulation of dynein by pct-1 and/or cdk-5. Involved in the formation of synapses in the dorsal region during synaptic remodeling of DD motor neurons. Required for anterograde trafficking of dense-core vesicles in the DB motor neuron dendrites. Required for the formation of dendritic branches of PVD sensory neurons. May also play a role in GABAergic synaptic vesicle localization in the ventral nerve cord. May play a role in the pairing of homologous chromosomes during meiosis. This Caenorhabditis elegans protein is Dynein heavy chain, cytoplasmic.